Reading from the N-terminus, the 573-residue chain is Proline--tRNA ligase (573 aa).

This sequence belongs to the class-II aminoacyl-tRNA synthetase family. ProS type 1 subfamily. In terms of assembly, homodimer.

It localises to the cytoplasm. The catalysed reaction is tRNA(Pro) + L-proline + ATP = L-prolyl-tRNA(Pro) + AMP + diphosphate. In terms of biological role, catalyzes the attachment of proline to tRNA(Pro) in a two-step reaction: proline is first activated by ATP to form Pro-AMP and then transferred to the acceptor end of tRNA(Pro). As ProRS can inadvertently accommodate and process non-cognate amino acids such as alanine and cysteine, to avoid such errors it has two additional distinct editing activities against alanine. One activity is designated as 'pretransfer' editing and involves the tRNA(Pro)-independent hydrolysis of activated Ala-AMP. The other activity is designated 'posttransfer' editing and involves deacylation of mischarged Ala-tRNA(Pro). The misacylated Cys-tRNA(Pro) is not edited by ProRS. The chain is Proline--tRNA ligase from Limosilactobacillus fermentum (strain NBRC 3956 / LMG 18251) (Lactobacillus fermentum).